The following is a 457-amino-acid chain: MALWGGRFSQAADQRFKSFNDSLRFDYRLTEQDIVGSVAWSRALVTVGVLSETEQQQLEDALNVTLEEVRTAPEAILASDAEDIHSWVEQCLIDKVGDLGKKLHTGRSRNDQVATDLKLWCRAQVTELLGAIHLLQQALVMTAEAHQDVVMPGYTHLQRAQPITFAHWCLAYSEMLARDESRLRDTLTRLDVSPLGAGALAGTAYAIDRDKLAGWLGFASATRNSLDSVSDRDHVLELLSYAAIGMVHLSRFAEDLIFFNTGEAGFIELSDRVTSGSSLMPQKKNPDALELIRGKCGRVQGALTGMMMTLKGLPLAYNKDMQEDKEGLFDALDTWLDCLHMAALVLDGIQLKSPRCREAAQQGYANATELADYLVARGIPFREAHHIVGEAVVEAIRQGVPLETLPLARLQAFSPVIDEDVYPVLALASCLAQRKAKGGVAPEQIAQAIAEAKQRLA.

The protein belongs to the lyase 1 family. Argininosuccinate lyase subfamily.

The protein resides in the cytoplasm. The enzyme catalyses 2-(N(omega)-L-arginino)succinate = fumarate + L-arginine. It participates in amino-acid biosynthesis; L-arginine biosynthesis; L-arginine from L-ornithine and carbamoyl phosphate: step 3/3. This Sodalis glossinidius (strain morsitans) protein is Argininosuccinate lyase.